Reading from the N-terminus, the 1356-residue chain is Collagen alpha-2(I) chain (1356 aa).

The N-terminal stretch at 1–22 is a signal peptide; the sequence is MLSFVDNRILLLLAVTSLLASC. The tract at residues 22–1112 is disordered; it reads CQSGGLKGPR…DQSGGYDEYR (1091 aa). Gln-23 and Gln-73 each carry pyrrolidone carboxylic acid. Positions 23–72 are cleaved as a propeptide — N-terminal propeptide; sequence QSGGLKGPRGAKGPRGDRGPQGPNGRDGKAGLPGIAGPPGPPGLGGNFAA. Over residues 76 to 88 the composition is skewed to gly residues; sequence GGKGSDPGPGPMG. At Lys-78 the chain carries Allysine. A 5-hydroxylysine; alternate modification is found at Lys-171. Lys-171 is a glycosylation site (O-linked (Gal...) hydroxylysine; alternate). The segment covering 219–248 has biased composition (low complexity); it reads AGPAGPAGARGADGSTGPAGPAGPLGAAGP. Gly residues predominate over residues 259-280; the sequence is GEIGGAGSNGPSGPQGGRGEPG. Residues 281 to 315 show a composition bias toward low complexity; that stretch reads INGAVGPVGPVGNPGNNGINGAKGAAGLPGVAGAP. Residues 317–327 are compositionally biased toward pro residues; that stretch reads FPGPRGGPGPQ. 4 stretches are compositionally biased toward gly residues: residues 334–343, 391–412, 418–427, and 448–457; these read GARGLGGDPG, GARGGAGTRGLPGLEGRGGPIG, GATGPGGIRG, and GNSGQGGPPG. Low complexity predominate over residues 479–489; the sequence is PRGQPGNIGFP. Positions 511–520 are enriched in gly residues; the sequence is GLRGGPGADG. 2 stretches are compositionally biased toward low complexity: residues 521–564 and 587–603; these read NNGA…AGKA and NSGPAGSAGSQGAIGAR. Composition is skewed to gly residues over residues 610-619 and 628-646; these read GPDGGKGEPG and GHQGPGGMPGERGAGGTPG. Residues 648 to 659 are compositionally biased toward basic and acidic residues; that stretch reads KGEKGEGGHRGL. The segment covering 716-731 has biased composition (low complexity); it reads LPGFAGPPGSDGQSGP. Residues 736–745 show a composition bias toward gly residues; that stretch reads GPAGGKGDVG. Low complexity-rich tracts occupy residues 746-764 and 776-786; these read PAGPAGPSGQSGPSGASGP and PSGLTGFPGAA. Over residues 787 to 796 the composition is skewed to gly residues; that stretch reads GRVGGPGPAG. Over residues 797–809 the composition is skewed to low complexity; sequence IAGPPGSAGPAGK. Positions 817-826 are enriched in gly residues; that stretch reads GDPGPGGPQG. Residues 827-858 are compositionally biased toward low complexity; it reads EQGVVGPAGISGDKGPSGESGPPGAPGTAGPQ. Residues 877 to 886 show a composition bias toward gly residues; sequence GLPGGPGAVG. A compositionally biased stretch (low complexity) spans 888–903; the sequence is PGRLGPAGASGPRGPA. Gly residues predominate over residues 976–985; that stretch reads GPTGNGGPVG. Over residues 999–1013 the composition is skewed to basic and acidic residues; sequence RGEKGGAGEKGDRGM. Residues 1083–1095 are compositionally biased toward pro residues; that stretch reads AGPPGSPGLPGPA. Residues 1114-1356 constitute a propeptide, C-terminal propeptide; that stretch reads DQPSFRAKDY…GLDIGPVCFK (243 aa). The region spanning 1123 to 1356 is the Fibrillar collagen NC1 domain; that stretch reads YEVDATIKSL…GLDIGPVCFK (234 aa). Disulfide bonds link Cys-1153-Cys-1185, Cys-1193-Cys-1354, and Cys-1262-Cys-1307. Positions 1171, 1173, 1174, 1176, and 1179 each coordinate Ca(2+). The N-linked (GlcNAc...) asparagine glycan is linked to Asn-1257.

It belongs to the fibrillar collagen family. As to quaternary structure, trimers of one alpha 2(I) and two alpha 1(I) chains. Prolines at the third position of the tripeptide repeating unit (G-X-Y) are hydroxylated in some or all of the chains. Forms the fibrils of tendon, ligaments and bones. In bones the fibrils are mineralized with calcium hydroxyapatite.

Its subcellular location is the secreted. It localises to the extracellular space. The protein resides in the extracellular matrix. In terms of biological role, type I collagen is a member of group I collagen (fibrillar forming collagen). This is Collagen alpha-2(I) chain (col1a2) from Oncorhynchus mykiss (Rainbow trout).